A 34-amino-acid polypeptide reads, in one-letter code: CIKNGNGCQPDGSQGNCCSRYCHKEPGWVAGYCR.

3 disulfide bridges follow: Cys1/Cys18, Cys8/Cys22, and Cys17/Cys33.

The protein localises to the secreted. Its function is as follows. Has antifungal activity against C.glabrata. The chain is Antimicrobial peptide Alo-1 from Acrocinus longimanus (Giant harlequin beetle).